The chain runs to 84 residues: U8-theraphotoxin-Hhn1c 1 (84 aa).

A signal peptide spans 1–21 (MKVVLIVCLVWVMAMMELVSC). Disulfide bonds link cysteine 23-cysteine 35, cysteine 29-cysteine 44, cysteine 34-cysteine 67, cysteine 54-cysteine 75, and cysteine 69-cysteine 81.

It belongs to the AVIT (prokineticin) family. As to expression, expressed by the venom gland.

It is found in the secreted. This Cyriopagopus hainanus (Chinese bird spider) protein is U8-theraphotoxin-Hhn1c 1.